The chain runs to 1349 residues: Aldehyde oxidase 2 (1349 aa).

The 89-residue stretch at 8–96 (DELVFFVNGR…GAAVTTVEGV (89 aa)) folds into the 2Fe-2S ferredoxin-type domain. Residues Cys47, Cys52, Cys55, and Cys78 each coordinate [2Fe-2S] cluster. Position 117 (Gln117) interacts with Mo-molybdopterin. Positions 118, 121, 153, and 155 each coordinate [2Fe-2S] cluster. A Mo-molybdopterin-binding site is contributed by Cys155. In terms of domain architecture, FAD-binding PCMH-type spans 240 to 425 (FYGERVTWIS…ESVHIPHSQK (186 aa)). Residues 268 to 275 (LVVGNTSL), Ala349, Ser358, His362, Asp371, and Leu415 contribute to the FAD site. Mo-molybdopterin contacts are provided by residues 816–817 (GF), 1098–1101 (ASVG), Gln1213, and Leu1278. Glu1280 acts as the Proton acceptor; for azaheterocycle hydroxylase activity in catalysis.

This sequence belongs to the xanthine dehydrogenase family. As to quaternary structure, homodimer. Requires [2Fe-2S] cluster as cofactor. FAD is required as a cofactor. It depends on Mo-molybdopterin as a cofactor. In terms of tissue distribution, only detected at very few levels in nasal mucosa.

Its subcellular location is the cytoplasm. The catalysed reaction is an aldehyde + O2 + H2O = a carboxylate + H2O2 + H(+). Oxidase with broad substrate specificity, oxidizing aromatic azaheterocycles, such as phthalazine, as well as aldehydes, such as benzaldehyde and retinal. The protein is Aldehyde oxidase 2 (AOX2) of Macaca fascicularis (Crab-eating macaque).